The chain runs to 411 residues: LL-diaminopimelate aminotransferase (411 aa).

Residues Y15 and G42 each contribute to the substrate site. Residues Y72, 105-106, Y129, N186, Y217, and 245-247 contribute to the pyridoxal 5'-phosphate site; these read SK and SFS. Residues K106, Y129, and N186 each coordinate substrate. Position 248 is an N6-(pyridoxal phosphate)lysine (K248). Pyridoxal 5'-phosphate-binding residues include R256 and N287. Residues N287 and R382 each coordinate substrate.

Belongs to the class-I pyridoxal-phosphate-dependent aminotransferase family. LL-diaminopimelate aminotransferase subfamily. In terms of assembly, homodimer. Pyridoxal 5'-phosphate serves as cofactor.

The catalysed reaction is (2S,6S)-2,6-diaminopimelate + 2-oxoglutarate = (S)-2,3,4,5-tetrahydrodipicolinate + L-glutamate + H2O + H(+). It participates in amino-acid biosynthesis; L-lysine biosynthesis via DAP pathway; LL-2,6-diaminopimelate from (S)-tetrahydrodipicolinate (aminotransferase route): step 1/1. In terms of biological role, involved in the synthesis of meso-diaminopimelate (m-DAP or DL-DAP), required for both lysine and peptidoglycan biosynthesis. Catalyzes the direct conversion of tetrahydrodipicolinate to LL-diaminopimelate. Is also able to use meso-diaminopimelate, lysine or ornithine as substrates. This is LL-diaminopimelate aminotransferase from Protochlamydia amoebophila (strain UWE25).